Consider the following 153-residue polypeptide: Superoxide dismutase [Cu-Zn] (153 aa).

Histidine 46, histidine 48, and histidine 63 together coordinate Cu cation. A disulfide bridge links cysteine 57 with cysteine 146. Zn(2+) is bound by residues histidine 63, histidine 71, histidine 80, and aspartate 83. Histidine 120 is a binding site for Cu cation.

Belongs to the Cu-Zn superoxide dismutase family. Homodimer. Cu cation serves as cofactor. Zn(2+) is required as a cofactor.

The protein resides in the cytoplasm. It carries out the reaction 2 superoxide + 2 H(+) = H2O2 + O2. Its function is as follows. Destroys radicals which are normally produced within the cells and which are toxic to biological systems. In Solidago canadensis var. scabra (Tall goldenrod), this protein is Superoxide dismutase [Cu-Zn] (SODCC).